The chain runs to 54 residues: Hydrophobic protein RCI2B (54 aa).

2 helical membrane-spanning segments follow: residues 2–22 and 32–52; these read STAT…GVFL and ICLI…LYII.

It belongs to the UPF0057 (PMP3) family.

Its subcellular location is the membrane. In Arabidopsis thaliana (Mouse-ear cress), this protein is Hydrophobic protein RCI2B (RCI2B).